The sequence spans 322 residues: GTP 3',8-cyclase (322 aa).

Residues 5–217 enclose the Radical SAM core domain; it reads SYGRVIDYLR…NIIAQKYSFK (213 aa). GTP is bound at residue Arg14. 2 residues coordinate [4Fe-4S] cluster: Cys21 and Cys25. Tyr27 lines the S-adenosyl-L-methionine pocket. Residue Cys28 participates in [4Fe-4S] cluster binding. Arg64 lines the GTP pocket. Residue Gly68 participates in S-adenosyl-L-methionine binding. Thr95 lines the GTP pocket. Residue Ser119 coordinates S-adenosyl-L-methionine. Lys155 contacts GTP. An S-adenosyl-L-methionine-binding site is contributed by Met189. [4Fe-4S] cluster-binding residues include Cys249 and Cys252. Position 254 to 256 (254 to 256) interacts with GTP; that stretch reads RIR. Cys266 is a [4Fe-4S] cluster binding site.

Belongs to the radical SAM superfamily. MoaA family. Monomer and homodimer. Requires [4Fe-4S] cluster as cofactor.

The catalysed reaction is GTP + AH2 + S-adenosyl-L-methionine = (8S)-3',8-cyclo-7,8-dihydroguanosine 5'-triphosphate + 5'-deoxyadenosine + L-methionine + A + H(+). It functions in the pathway cofactor biosynthesis; molybdopterin biosynthesis. In terms of biological role, catalyzes the cyclization of GTP to (8S)-3',8-cyclo-7,8-dihydroguanosine 5'-triphosphate. This Campylobacter lari (strain RM2100 / D67 / ATCC BAA-1060) protein is GTP 3',8-cyclase.